A 324-amino-acid chain; its full sequence is Phospho-N-acetylmuramoyl-pentapeptide-transferase (324 aa).

Helical transmembrane passes span 5-25, 52-72, 76-96, 117-137, 147-167, 176-196, 203-223, 227-247, 250-270, and 302-322; these read IIVI…PLFI, PTMG…WVTA, VLSA…VLGF, FIGQ…SGFS, WSFD…VGGS, LDGL…VLAW, VAVF…FNAH, VFMG…VAVL, LELL…SVII, and IVVT…YIEV.

This sequence belongs to the glycosyltransferase 4 family. MraY subfamily. Mg(2+) serves as cofactor.

The protein resides in the cell membrane. The catalysed reaction is UDP-N-acetyl-alpha-D-muramoyl-L-alanyl-gamma-D-glutamyl-meso-2,6-diaminopimeloyl-D-alanyl-D-alanine + di-trans,octa-cis-undecaprenyl phosphate = di-trans,octa-cis-undecaprenyl diphospho-N-acetyl-alpha-D-muramoyl-L-alanyl-D-glutamyl-meso-2,6-diaminopimeloyl-D-alanyl-D-alanine + UMP. The protein operates within cell wall biogenesis; peptidoglycan biosynthesis. Functionally, catalyzes the initial step of the lipid cycle reactions in the biosynthesis of the cell wall peptidoglycan: transfers peptidoglycan precursor phospho-MurNAc-pentapeptide from UDP-MurNAc-pentapeptide onto the lipid carrier undecaprenyl phosphate, yielding undecaprenyl-pyrophosphoryl-MurNAc-pentapeptide, known as lipid I. This is Phospho-N-acetylmuramoyl-pentapeptide-transferase from Geobacillus thermodenitrificans (strain NG80-2).